A 417-amino-acid chain; its full sequence is Serine hydroxymethyltransferase (417 aa).

Residues Leu120 and 124–126 (GHL) each bind (6S)-5,6,7,8-tetrahydrofolate. Position 229 is an N6-(pyridoxal phosphate)lysine (Lys229).

Belongs to the SHMT family. In terms of assembly, homodimer. Pyridoxal 5'-phosphate serves as cofactor.

It localises to the cytoplasm. It carries out the reaction (6R)-5,10-methylene-5,6,7,8-tetrahydrofolate + glycine + H2O = (6S)-5,6,7,8-tetrahydrofolate + L-serine. The protein operates within one-carbon metabolism; tetrahydrofolate interconversion. It participates in amino-acid biosynthesis; glycine biosynthesis; glycine from L-serine: step 1/1. In terms of biological role, catalyzes the reversible interconversion of serine and glycine with tetrahydrofolate (THF) serving as the one-carbon carrier. This reaction serves as the major source of one-carbon groups required for the biosynthesis of purines, thymidylate, methionine, and other important biomolecules. Also exhibits THF-independent aldolase activity toward beta-hydroxyamino acids, producing glycine and aldehydes, via a retro-aldol mechanism. The protein is Serine hydroxymethyltransferase of Anaeromyxobacter sp. (strain Fw109-5).